Here is a 347-residue protein sequence, read N- to C-terminus: Olfactory receptor 6J1 (347 aa).

Topologically, residues 1–24 (MGNWTAAVTEFVLLGFSLSREVEL) are extracellular. Residue asparagine 3 is glycosylated (N-linked (GlcNAc...) asparagine). The chain crosses the membrane as a helical span at residues 25–45 (LLLVLLLPTFLLTLLGNLLII). At 46 to 53 (STVLSCSR) the chain is on the cytoplasmic side. Residues 54 to 74 (LHTPMYFFLCNLSILDILFTS) traverse the membrane as a helical segment. The Extracellular segment spans residues 75–98 (VISPKVLANLGSRDKTISFAGCIT). A disulfide bridge links cysteine 96 with cysteine 188. A helical membrane pass occupies residues 99 to 119 (QCYFYFFLGTVEFLLLTVMSY). Residues 120 to 138 (DRYATICCPLRYTTIMRPS) are Cytoplasmic-facing. The helical transmembrane segment at 139–159 (VCIGTVVFSWVGGFLSVLFPT) threads the bilayer. The Extracellular portion of the chain corresponds to 160–196 (ILISQLPFCGSNIINHFFCDSGPLLALACADTTAIEL). Residues 197–216 (MDFMLSSMVILCCIVLVAYS) traverse the membrane as a helical segment. Over 217–236 (YTYIILTIVRIPSASGRKKA) the chain is Cytoplasmic. Residues 237-257 (FNTCASHLTIVIISSGITVFI) traverse the membrane as a helical segment. The Extracellular portion of the chain corresponds to 258-270 (YVTPSQKEYLEIN). A helical membrane pass occupies residues 271–291 (KIPLVLSSVVTPFLNPFIYTL). The Cytoplasmic portion of the chain corresponds to 292–347 (RNDTVQGVLRDVWVRVRGVFEKRMRAVLRSRLSSNKDHQGRACSSPPCVYSVKLQC).

It belongs to the G-protein coupled receptor 1 family.

The protein localises to the cell membrane. Functionally, odorant receptor. In Homo sapiens (Human), this protein is Olfactory receptor 6J1 (OR6J1).